A 98-amino-acid chain; its full sequence is Large ribosomal subunit protein bL21 (98 aa).

This sequence belongs to the bacterial ribosomal protein bL21 family. Part of the 50S ribosomal subunit. Contacts protein L20.

Functionally, this protein binds to 23S rRNA in the presence of protein L20. The chain is Large ribosomal subunit protein bL21 from Aquifex aeolicus (strain VF5).